The following is a 427-amino-acid chain: Peptidase B (427 aa).

Positions 195 and 200 each coordinate Mn(2+). Lysine 207 is a catalytic residue. Mn(2+) is bound by residues aspartate 218, aspartate 277, and glutamate 279. Arginine 281 is an active-site residue.

Belongs to the peptidase M17 family. Homohexamer. Mn(2+) is required as a cofactor.

The protein localises to the cytoplasm. It carries out the reaction Release of an N-terminal amino acid, Xaa, from a peptide or arylamide. Xaa is preferably Glu or Asp but may be other amino acids, including Leu, Met, His, Cys and Gln.. In terms of biological role, probably plays an important role in intracellular peptide degradation. The chain is Peptidase B from Escherichia coli (strain SMS-3-5 / SECEC).